Reading from the N-terminus, the 171-residue chain is Large ribosomal subunit protein uL10 (171 aa).

It belongs to the universal ribosomal protein uL10 family. As to quaternary structure, part of the ribosomal stalk of the 50S ribosomal subunit. The N-terminus interacts with L11 and the large rRNA to form the base of the stalk. The C-terminus forms an elongated spine to which L12 dimers bind in a sequential fashion forming a multimeric L10(L12)X complex.

In terms of biological role, forms part of the ribosomal stalk, playing a central role in the interaction of the ribosome with GTP-bound translation factors. This is Large ribosomal subunit protein uL10 from Nitrosomonas europaea (strain ATCC 19718 / CIP 103999 / KCTC 2705 / NBRC 14298).